Reading from the N-terminus, the 334-residue chain is Syntaxin-18 (334 aa).

Topologically, residues 1–308 (MAVDITLLFR…EDIREAIKNN (308 aa)) are cytoplasmic. Disordered regions lie at residues 29 to 50 (GGAD…GDFS) and 166 to 225 (LSKL…GEDE). Composition is skewed to basic and acidic residues over residues 33 to 50 (GSRD…GDFS) and 166 to 182 (LSKL…DSTS). Residues 183–192 (EKAPQNASQD) show a composition bias toward polar residues. A compositionally biased stretch (basic and acidic residues) spans 193 to 207 (SEGKPAAEELPEKPL). Residues 242 to 304 (IGEMNSLFDE…KEGNEDIREA (63 aa)) form the t-SNARE coiled-coil homology domain. A helical; Anchor for type IV membrane protein membrane pass occupies residues 309–329 (AGFRVWILFFLVMCSFSLLFL). Residues 330–334 (DWYDS) are Lumenal-facing.

Belongs to the syntaxin family. Component of a SNARE complex consisting of STX18, USE1L, BNIP1/SEC20L, and SEC22B. RINT1/TIP20L and ZW10 are associated with the complex through interaction with BNIP1/SEC20L. Interacts directly with USE1L and BNIP1/SEC20L.

It is found in the endoplasmic reticulum membrane. The protein resides in the golgi apparatus membrane. In terms of biological role, syntaxin that may be involved in targeting and fusion of Golgi-derived retrograde transport vesicles with the ER. The polypeptide is Syntaxin-18 (Stx18) (Mus musculus (Mouse)).